We begin with the raw amino-acid sequence, 345 residues long: Protein-glutamate methylesterase/protein-glutamine glutaminase 1 (345 aa).

In terms of domain architecture, Response regulatory spans 8–123 (SVLVIDDSAH…FEAMEALRVE (116 aa)). Asp59 bears the 4-aspartylphosphate mark. Positions 151-344 (AGEPPLVVAV…PALAALARRR (194 aa)) constitute a CheB-type methylesterase domain. Active-site residues include Ser163, His190, and Asp286.

The protein belongs to the CheB family. Phosphorylated by CheA. Phosphorylation of the N-terminal regulatory domain activates the methylesterase activity.

Its subcellular location is the cytoplasm. The enzyme catalyses [protein]-L-glutamate 5-O-methyl ester + H2O = L-glutamyl-[protein] + methanol + H(+). It catalyses the reaction L-glutaminyl-[protein] + H2O = L-glutamyl-[protein] + NH4(+). Functionally, involved in chemotaxis. Part of a chemotaxis signal transduction system that modulates chemotaxis in response to various stimuli. Catalyzes the demethylation of specific methylglutamate residues introduced into the chemoreceptors (methyl-accepting chemotaxis proteins or MCP) by CheR. Also mediates the irreversible deamidation of specific glutamine residues to glutamic acid. The chain is Protein-glutamate methylesterase/protein-glutamine glutaminase 1 from Myxococcus xanthus (strain DK1622).